The sequence spans 279 residues: MQGTFKRFYHPTLTRMSFLDKFLKPMMATASPKEYQIKQLVKPIGLTQAPRKSTKYSQGNSLRDMFDSEKTNHRVKELAVEFSKSGLYDVQVFQKTKGKLFIAPVSYWKEDKALFFPHLIGTAMDGTKQQNIEDMLRGKTSIVRLFSTASGDKLSSSYFQGIVDDNKKTDYLTEADARLSLNDSNVQIIEVNLVENAVKSALVKTLARWANRVPSWRQPFYFECSRGQWPFSVREELFCNNVFSGYVFLVDQQLKIRWAACGEATPSEKEALWKFAKRL.

The protein belongs to the ATP10 family.

The protein localises to the mitochondrion inner membrane. Essential for the assembly of the mitochondrial F1-F0 complex. The chain is Mitochondrial ATPase complex subunit ATP10 (ATP10) from Saccharomyces cerevisiae (strain ATCC 204508 / S288c) (Baker's yeast).